Here is a 628-residue protein sequence, read N- to C-terminus: Kelch-like protein 14 (628 aa).

Positions 33–151 (CDVTLTAQGQ…LYTANVTLSL (119 aa)) constitute a BTB domain. Residues 69 to 115 (GGGVGGQDGLGAPKDQQQPPQQQPSQQQQPPPQEEPGTPSSSPDDKL) form a disordered region. Residues 84 to 96 (QQQPPQQQPSQQQ) show a composition bias toward low complexity. The BACK domain occupies 210–279 (VEDVLLLNFE…PAPELVERVQ (70 aa)). Kelch repeat units follow at residues 323 to 372 (MLLL…EVEN), 373 to 424 (FLFV…RLDK), 425 to 471 (HLYV…VHNG), 473 to 518 (IYIS…VMND), 520 to 570 (LYAI…VLDD), and 572 to 620 (IYLV…TVIL).

In terms of assembly, interacts with TOR1A, preferentially with the ATP-free form.

The protein localises to the cytoplasm. Its subcellular location is the cytosol. The protein resides in the endoplasmic reticulum membrane. The protein is Kelch-like protein 14 (KLHL14) of Homo sapiens (Human).